The primary structure comprises 1304 residues: MSCMNYASRLSKNEYKGPLGEEEFFEDTEEEKKKVKELIEKIRSSEYIVVHSGAGISTSSGLQDFRGPTGIWTNEHLNELKNKKKRNHDFKDNKRKLKSNDINCKNTSDMCSPSFFHKEKKENTLNIVKRERYYNEDNVDMNACNERVVHPNHVYVNHEDDNNNNNNNNNNDNNLYNNVYNSVGSNDHTNKESILIKKENNSENVRKDIHDKVNTKNVKKIDVKETNNLDPENYVIFGKRKKKVIELHLALPSKTHIMINELINKNIIKFMITQNIDSLHHRCGKHFSKTAEIHGNIFTERCDFCGRRYLRDYLISTISFKPTGSLCFLCSFPPIGVCTDVLLDWNNSYEEFFHLNSIKHSQIADFHFCLGSSFYIVPASSYPSKKKYANANSYSCVINYQKSFLSKEVNLNIHSNVNNISDIIIKEFSLNPLSIRSARITIVRCPINTLDVICDKLISIHNIKMKHKSMRQHSIDYSQMGNKDEKYNNEKYVKRNMTECLYYNKEGECYEKRKYKLMEKKFFPNNQQNEFIPNRINIFEQKFHEHNNNNNNNNNNNNNNNNNNNNNNNNNNNNNNNNNNSSSSIDSSCSINSNYHISKNINPDFSFVENQSNIYENYKEQTFILICPMIINIKTVRLESFHKVYIKLLDDIKGLWFIKTNFSCILEVELWYHSFILLKLDFNKSDPFIQLNAWNVNVAYTYGDDIDDFDYFKNDENIKKPFNLYKNKYISNMRREGHVNNLYTLDNEKVKSNTSNNNNNNNNNNNNNNNNNNNNNNNNNNNNNNNNNNNNNNNNNDNNNNNISDHNIYDDHNNNNNKNHNNYDKDNSNESYYCSEILNEHVHVGYNPNNYEPNCKVYILAYLDNLRTRNINNNVNNNNFSRFNLTQSCKLLYNIYCVLNKDNEQKKNSTIKETYDKLDYFIKNFDFNRDSCLYTNNFINMLIQNERHGNQSRYKFRERRKRLLNDYSSCSSDDDQSGKNIFIFYNLYMNQYKKKEDNEINDIYKKYDVHEKNIYDESKQYVHKVRVRTDLINHKSVYKILKNNYLVNINNMKLMEKKNNSEKLFLINDKDNNSLLSINNKENFNCIPSRQNNVKKNSEYMHEEENNKTNSNENIARLNNNDFIQVMETEKQKKYNSFDKYNSDRSSINDTFDEIKYNKNNDNNNDDNNYDDNKNDDDNNNDDNNNNDDNNNNDDNNNNDDNNNGYIYSPVLFINKKFKLGELVYKIPKYVKPQKIYTPYKKISRNKKYSNTLQKDRYEKWKMLYEELINNENKTYIIDSVLYKEISYLPYWILNYVNDLFECM.

The Deacetylase sirtuin-type domain occupies 28–466; that stretch reads TEEEKKKVKE…LISIHNIKMK (439 aa). Residues 53–72 and 274–277 each bind NAD(+); these read GAGI…TGIW and QNID. Histidine 294 serves as the catalytic Proton acceptor. Positions 302, 305, 327, and 330 each coordinate Zn(2+). Residues 371–373, 399–401, and valine 417 each bind NAD(+); these read GSS and NYQ. Disordered regions lie at residues 545–585, 749–827, and 1154–1203; these read EHNN…SSSI, KVKS…DKDN, and EIKY…DDNN. Low complexity-rich tracts occupy residues 548-585, 756-806, and 1182-1203; these read NNNN…SSSI, NNNN…ISDH, and DDNN…DDNN.

This sequence belongs to the sirtuin family. Class IV subfamily. Zn(2+) is required as a cofactor.

The enzyme catalyses N(6)-acetyl-L-lysyl-[protein] + NAD(+) + H2O = 2''-O-acetyl-ADP-D-ribose + nicotinamide + L-lysyl-[protein]. Its function is as follows. Regulates the expression of the surface antigen-coding var genes central to the malaria pathogenesis. Cooperates with Sir2A to mediate silencing and mutual exclusive expression of only 1 of the 60 subtelomeric var genes at a time, coding for functionally different but epitopically variant versions of the erythrocyte membrane protein 1 (PfEMP1) molecule, to evade the detection by host immune surveillance. This chain is NAD-dependent protein deacetylase Sir2B, found in Plasmodium falciparum (isolate 3D7).